The chain runs to 493 residues: 6-aminohexanoate-cyclic-dimer hydrolase (493 aa).

Residues lysine 72 and serine 150 each act as charge relay system in the active site. Serine 174 functions as the Acyl-ester intermediate in the catalytic mechanism.

The protein belongs to the amidase family. In terms of assembly, homodimer.

It catalyses the reaction 1,8-diazacyclotetradecane-2,9-dione + H2O = N-(6-aminohexanoyl)-6-aminohexanoate. Its pathway is xenobiotic degradation; nylon-6 oligomer degradation. Functionally, catalyzes the hydrolysis of 6-aminohexanoic acid cyclic dimer (1,8-diazacyclotetradecane-2,9-dione) to form the linear dimer 6-aminohexanoyl-6-aminohexanoic acid. The sequence is that of 6-aminohexanoate-cyclic-dimer hydrolase (nylA) from Pseudomonas sp. (strain NK87).